The sequence spans 759 residues: Phosphoribosylformylglycinamidine synthase subunit PurL (759 aa).

The active site involves His-61. ATP contacts are provided by Tyr-64 and Lys-105. Glu-107 is a binding site for Mg(2+). Residues 108–111 (SHNH) and Arg-130 each bind substrate. Catalysis depends on His-109, which acts as the Proton acceptor. Asp-131 contributes to the Mg(2+) binding site. A substrate-binding site is contributed by Gln-260. Position 288 (Asp-288) interacts with Mg(2+). A substrate-binding site is contributed by 332 to 334 (ESQ). ATP is bound by residues Asp-520 and Gly-557. Asn-558 serves as a coordination point for Mg(2+). Ser-560 serves as a coordination point for substrate.

This sequence belongs to the FGAMS family. As to quaternary structure, monomer. Part of the FGAM synthase complex composed of 1 PurL, 1 PurQ and 2 PurS subunits.

It is found in the cytoplasm. It carries out the reaction N(2)-formyl-N(1)-(5-phospho-beta-D-ribosyl)glycinamide + L-glutamine + ATP + H2O = 2-formamido-N(1)-(5-O-phospho-beta-D-ribosyl)acetamidine + L-glutamate + ADP + phosphate + H(+). The protein operates within purine metabolism; IMP biosynthesis via de novo pathway; 5-amino-1-(5-phospho-D-ribosyl)imidazole from N(2)-formyl-N(1)-(5-phospho-D-ribosyl)glycinamide: step 1/2. Functionally, part of the phosphoribosylformylglycinamidine synthase complex involved in the purines biosynthetic pathway. Catalyzes the ATP-dependent conversion of formylglycinamide ribonucleotide (FGAR) and glutamine to yield formylglycinamidine ribonucleotide (FGAM) and glutamate. The FGAM synthase complex is composed of three subunits. PurQ produces an ammonia molecule by converting glutamine to glutamate. PurL transfers the ammonia molecule to FGAR to form FGAM in an ATP-dependent manner. PurS interacts with PurQ and PurL and is thought to assist in the transfer of the ammonia molecule from PurQ to PurL. This Thermoplasma acidophilum (strain ATCC 25905 / DSM 1728 / JCM 9062 / NBRC 15155 / AMRC-C165) protein is Phosphoribosylformylglycinamidine synthase subunit PurL.